Consider the following 473-residue polypeptide: UDP-glycosyltransferase 71A27 (473 aa).

His-15 functions as the Proton acceptor in the catalytic mechanism. His-15 serves as a coordination point for an anthocyanidin. Catalysis depends on Asp-117, which acts as the Charge relay. Positions 345, 347, 362, 365, 366, 367, and 370 each coordinate UDP-alpha-D-glucose. Gly-385 serves as a coordination point for an anthocyanidin. UDP-alpha-D-glucose contacts are provided by Glu-386 and Gln-387.

Belongs to the UDP-glycosyltransferase family.

The catalysed reaction is (20S)-protopanaxadiol + UDP-alpha-D-glucose = (20S)-ginsenoside C-K + UDP + H(+). It participates in secondary metabolite biosynthesis; terpenoid biosynthesis. Component of the triterpene saponins (e.g. PPD-type ginsenosides or panaxosides) biosynthetic pathways. Glycosyltransferase that catalyzes the biosynthesis of compound K from protopanaxadiol (PPD). The sequence is that of UDP-glycosyltransferase 71A27 from Panax ginseng (Korean ginseng).